A 453-amino-acid polypeptide reads, in one-letter code: Ribosomal protein uS12 methylthiotransferase RimO (453 aa).

Residues 3 to 118 enclose the MTTase N-terminal domain; sequence KKVGIISLGC…IAKVIEEFYS (116 aa). [4Fe-4S] cluster is bound by residues Cys12, Cys48, Cys81, Cys162, Cys166, and Cys169. A Radical SAM core domain is found at 148–378; that stretch reads STNSGYAYLK…MQLQKEIVQR (231 aa). The TRAM domain occupies 381-449; it reads ESRLEKVYKT…DYDLIGEVIN (69 aa).

The protein belongs to the methylthiotransferase family. RimO subfamily. [4Fe-4S] cluster serves as cofactor.

It localises to the cytoplasm. It carries out the reaction L-aspartate(89)-[ribosomal protein uS12]-hydrogen + (sulfur carrier)-SH + AH2 + 2 S-adenosyl-L-methionine = 3-methylsulfanyl-L-aspartate(89)-[ribosomal protein uS12]-hydrogen + (sulfur carrier)-H + 5'-deoxyadenosine + L-methionine + A + S-adenosyl-L-homocysteine + 2 H(+). Functionally, catalyzes the methylthiolation of an aspartic acid residue of ribosomal protein uS12. The sequence is that of Ribosomal protein uS12 methylthiotransferase RimO from Acetivibrio thermocellus (strain ATCC 27405 / DSM 1237 / JCM 9322 / NBRC 103400 / NCIMB 10682 / NRRL B-4536 / VPI 7372) (Clostridium thermocellum).